A 229-amino-acid polypeptide reads, in one-letter code: Urease accessory protein UreF (229 aa).

The protein belongs to the UreF family. As to quaternary structure, ureD, UreF and UreG form a complex that acts as a GTP-hydrolysis-dependent molecular chaperone, activating the urease apoprotein by helping to assemble the nickel containing metallocenter of UreC. The UreE protein probably delivers the nickel.

It is found in the cytoplasm. Its function is as follows. Required for maturation of urease via the functional incorporation of the urease nickel metallocenter. The chain is Urease accessory protein UreF from Nostoc sp. (strain PCC 7120 / SAG 25.82 / UTEX 2576).